Here is a 174-residue protein sequence, read N- to C-terminus: Recombination protein RecR (174 aa).

The C4-type zinc finger occupies 30–45 (CNACRTFTEEEECTIC). The region spanning 54–149 (GQLCIVEMPE…KVTRIAHGIP (96 aa)) is the Toprim domain.

Belongs to the RecR family.

May play a role in DNA repair. It seems to be involved in an RecBC-independent recombinational process of DNA repair. It may act with RecF and RecO. This is Recombination protein RecR from Haemophilus ducreyi (strain 35000HP / ATCC 700724).